Reading from the N-terminus, the 1116-residue chain is Protein translocase subunit SecA (1116 aa).

ATP-binding positions include glutamine 177, 195–199 (GEGKT), and aspartate 692.

It belongs to the SecA family. Monomer and homodimer. Part of the essential Sec protein translocation apparatus which comprises SecA, SecYEG and auxiliary proteins SecDF. Other proteins may also be involved.

It is found in the cell inner membrane. It localises to the cytoplasm. The enzyme catalyses ATP + H2O + cellular proteinSide 1 = ADP + phosphate + cellular proteinSide 2.. In terms of biological role, part of the Sec protein translocase complex. Interacts with the SecYEG preprotein conducting channel. Has a central role in coupling the hydrolysis of ATP to the transfer of proteins into and across the cell membrane, serving as an ATP-driven molecular motor driving the stepwise translocation of polypeptide chains across the membrane. The chain is Protein translocase subunit SecA from Flavobacterium psychrophilum (strain ATCC 49511 / DSM 21280 / CIP 103535 / JIP02/86).